A 142-amino-acid chain; its full sequence is Hemoglobin subunit alpha (142 aa).

Residues 2 to 142 (VLSPADKTNV…VSTVLTSKYR (141 aa)) enclose the Globin domain. Position 4 is a phosphoserine (serine 4). At lysine 8 the chain carries N6-succinyllysine. At threonine 9 the chain carries Phosphothreonine. Lysine 12 carries the N6-succinyllysine modification. Lysine 17 bears the N6-acetyllysine; alternate mark. Lysine 17 carries the post-translational modification N6-succinyllysine; alternate. Residue tyrosine 25 is modified to Phosphotyrosine. Serine 36 bears the Phosphoserine mark. Lysine 41 carries the N6-succinyllysine modification. Serine 50 is modified (phosphoserine). Histidine 59 lines the O2 pocket. Histidine 88 serves as a coordination point for heme b. Serine 103 is modified (phosphoserine). Phosphothreonine is present on threonine 109. 2 positions are modified to phosphoserine: serine 125 and serine 132. Phosphothreonine is present on residues threonine 135 and threonine 138. Serine 139 bears the Phosphoserine mark.

The protein belongs to the globin family. As to quaternary structure, heterotetramer of two alpha chains and two beta chains in adult hemoglobin A (HbA); two alpha chains and two delta chains in adult hemoglobin A2 (HbA2); two alpha chains and two epsilon chains in early embryonic hemoglobin Gower-2; two alpha chains and two gamma chains in fetal hemoglobin F (HbF). Red blood cells.

Its function is as follows. Involved in oxygen transport from the lung to the various peripheral tissues. Functionally, hemopressin acts as an antagonist peptide of the cannabinoid receptor CNR1. Hemopressin-binding efficiently blocks cannabinoid receptor CNR1 and subsequent signaling. This chain is Hemoglobin subunit alpha (HBA1), found in Pan paniscus (Pygmy chimpanzee).